Consider the following 196-residue polypeptide: Holliday junction branch migration complex subunit RuvA (196 aa).

The interval 1–65 (MIGNLSGTVD…ENTTQLYGFI (65 aa)) is domain I. A domain II region spans residues 66 to 143 (NKEEQSCLRL…KLETNNNNFY (78 aa)). A flexible linker region spans residues 144 to 147 (PINE). Residues 147–196 (EDAVSALINLGYEKTKVYDTIKKYKPNLDTKDIIRTALKELSNYEIDIMQ) are domain III.

It belongs to the RuvA family. As to quaternary structure, homotetramer. Forms an RuvA(8)-RuvB(12)-Holliday junction (HJ) complex. HJ DNA is sandwiched between 2 RuvA tetramers; dsDNA enters through RuvA and exits via RuvB. An RuvB hexamer assembles on each DNA strand where it exits the tetramer. Each RuvB hexamer is contacted by two RuvA subunits (via domain III) on 2 adjacent RuvB subunits; this complex drives branch migration. In the full resolvosome a probable DNA-RuvA(4)-RuvB(12)-RuvC(2) complex forms which resolves the HJ.

It is found in the cytoplasm. Its function is as follows. The RuvA-RuvB-RuvC complex processes Holliday junction (HJ) DNA during genetic recombination and DNA repair, while the RuvA-RuvB complex plays an important role in the rescue of blocked DNA replication forks via replication fork reversal (RFR). RuvA specifically binds to HJ cruciform DNA, conferring on it an open structure. The RuvB hexamer acts as an ATP-dependent pump, pulling dsDNA into and through the RuvAB complex. HJ branch migration allows RuvC to scan DNA until it finds its consensus sequence, where it cleaves and resolves the cruciform DNA. This Wolbachia sp. subsp. Brugia malayi (strain TRS) protein is Holliday junction branch migration complex subunit RuvA.